We begin with the raw amino-acid sequence, 93 residues long: Small ribosomal subunit protein uS19 (93 aa).

This sequence belongs to the universal ribosomal protein uS19 family.

Functionally, protein S19 forms a complex with S13 that binds strongly to the 16S ribosomal RNA. The polypeptide is Small ribosomal subunit protein uS19 (Pediococcus pentosaceus (strain ATCC 25745 / CCUG 21536 / LMG 10740 / 183-1w)).